The chain runs to 351 residues: Anthranilate phosphoribosyltransferase (351 aa).

Residues Gly-80, 83-84 (GD), Thr-88, 90-93 (NIST), 108-116 (KHGNRSITS), and Ser-120 contribute to the 5-phospho-alpha-D-ribose 1-diphosphate site. Gly-80 is a binding site for anthranilate. Ser-92 contacts Mg(2+). Asn-111 contributes to the anthranilate binding site. Arg-166 is an anthranilate binding site. Residues Asp-229 and Glu-230 each contribute to the Mg(2+) site.

Belongs to the anthranilate phosphoribosyltransferase family. In terms of assembly, homodimer. The cofactor is Mg(2+).

It carries out the reaction N-(5-phospho-beta-D-ribosyl)anthranilate + diphosphate = 5-phospho-alpha-D-ribose 1-diphosphate + anthranilate. The protein operates within amino-acid biosynthesis; L-tryptophan biosynthesis; L-tryptophan from chorismate: step 2/5. Its function is as follows. Catalyzes the transfer of the phosphoribosyl group of 5-phosphorylribose-1-pyrophosphate (PRPP) to anthranilate to yield N-(5'-phosphoribosyl)-anthranilate (PRA). This is Anthranilate phosphoribosyltransferase from Chlorobaculum parvum (strain DSM 263 / NCIMB 8327) (Chlorobium vibrioforme subsp. thiosulfatophilum).